We begin with the raw amino-acid sequence, 838 residues long: Protein kintoun (838 aa).

Disordered stretches follow at residues 106–125 (RPKNEVATDPSSGSRGLNWS), 212–238 (NPTAEEQEPHPLAHMFPTKPPAPGKPE), 370–411 (LRHF…TSSP), 557–696 (NAPL…DSCS), and 776–838 (QQRR…EMDD). Residues 114 to 125 (DPSSGSRGLNWS) show a composition bias toward polar residues. Basic and acidic residues predominate over residues 370–380 (LRHFSREDSGV). S378 carries the phosphoserine modification. Over residues 389–398 (PVEEDPDGEL) the composition is skewed to acidic residues. Over residues 557–572 (NAPLDVEFERNQEGHA) the composition is skewed to basic and acidic residues. Residues 583–592 (EEEEEEEDKE) show a composition bias toward acidic residues. Residues 601–611 (DQQQQQQVQNK) show a composition bias toward low complexity. Basic residues-rich tracts occupy residues 612–623 (KSGKKQRKRNKK) and 673–683 (RSHRGILKRFS). Position 781 is a phosphoserine (S781). Positions 789–802 (EETRGSALKQKENP) are enriched in basic and acidic residues.

The protein belongs to the PIH1 family. Kintoun subfamily. In terms of assembly, interacts with Pp1alpha-96A, Pp1-87B, Pp1-13C and flw.

The protein resides in the cytoplasm. Its function is as follows. Required for cytoplasmic pre-assembly of axonemal dyneins, thereby playing a central role in motility in cilia and flagella. Involved in pre-assembly of dynein arm complexes in the cytoplasm before intraflagellar transport loads them for the ciliary compartment. This Drosophila sechellia (Fruit fly) protein is Protein kintoun.